Here is a 139-residue protein sequence, read N- to C-terminus: Acidic phospholipase A2 Tgc-E6 (139 aa).

An N-terminal signal peptide occupies residues 1–16 (MRTLWIMAVLLLGVEG). Intrachain disulfides connect Cys42–Cys132, Cys44–Cys60, Cys59–Cys111, Cys65–Cys139, Cys66–Cys104, Cys73–Cys97, and Cys91–Cys102. Residues Tyr43, Gly45, and Gly47 each coordinate Ca(2+). Residue His63 is part of the active site. Residue Asp64 participates in Ca(2+) binding. Residue Asp105 is part of the active site.

Belongs to the phospholipase A2 family. Group II subfamily. D49 sub-subfamily. Monomer. The cofactor is Ca(2+). In terms of tissue distribution, expressed by the venom gland.

Its subcellular location is the secreted. It catalyses the reaction a 1,2-diacyl-sn-glycero-3-phosphocholine + H2O = a 1-acyl-sn-glycero-3-phosphocholine + a fatty acid + H(+). Functionally, snake venom phospholipase A2 (PLA2) that inhibits the ADP-(IC(50)=272 nM) and collagen-induced (IC(50)=518 nM) human platelet aggregation in platelet rich plasma. Exhibits very high hydrolytic activities toward the synthetic lecithin, and prefers the anionic micelles (dPPC with deoxycholate) to the zwitterionic micelles (dPPC with Triton X-100). PLA2 catalyzes the calcium-dependent hydrolysis of the 2-acyl groups in 3-sn-phosphoglycerides. This is Acidic phospholipase A2 Tgc-E6 from Trimeresurus gracilis (Kikuchi habu).